We begin with the raw amino-acid sequence, 328 residues long: Integrator complex subunit 12 (328 aa).

The sufficient for binding to IntS1 and IntS9 and for 3'-end snRNA processing stretch occupies residues 1–45 (MAANIAAAAAAAQEVDPVLKKAIKLLHSSNPTSAAELRLLLDEAL). The PHD-type zinc-finger motif lies at 128–185 (DLNCCVCGEMVFTATNRLIECSKCGAMYHQECHKPPITKEEAADDQEQNWQCDTCCNK). Low complexity-rich tracts occupy residues 215-233 (KAKS…NSSS), 241-264 (SSST…SSSS), 274-283 (KSTAASSLSA), and 292-311 (SSGT…SKSS). Residues 215 to 328 (KAKSSVASSR…GSSSKRRSKQ (114 aa)) form a disordered region.

It belongs to the Integrator subunit 12 family. As to quaternary structure, belongs to the multiprotein complex Integrator, at least composed of IntS1, IntS2, IntS3, IntS4, omd/IntS5, IntS6, defl/IntS7, IntS8, IntS9, IntS10, IntS11, IntS12, asun/IntS13, IntS14 and IntS15. The core complex associates with protein phosphatase 2A subunits mts/PP2A and Pp2A-29B, to form the Integrator-PP2A (INTAC) complex. Within the complex, interacts with IntS1 and IntS9. Interaction with IntS1 is likely to be important for promoting 3'-end processing of snRNAs.

The protein localises to the nucleus. Component of the integrator complex, a multiprotein complex that terminates RNA polymerase II (Pol II) transcription in the promoter-proximal region of genes. The integrator complex provides a quality checkpoint during transcription elongation by driving premature transcription termination of transcripts that are unfavorably configured for transcriptional elongation: the complex terminates transcription by (1) catalyzing dephosphorylation of the C-terminal domain (CTD) of Pol II subunit Polr2A/Rbp1 and Spt5, and (2) degrading the exiting nascent RNA transcript via endonuclease activity. The integrator complex is also involved in the 3'-end processing of the U7 snRNA, and also the spliceosomal snRNAs U1, U2, U4 and U5. Required for the normal expression of the Integrator complex component IntS1. This chain is Integrator complex subunit 12, found in Drosophila melanogaster (Fruit fly).